Reading from the N-terminus, the 154-residue chain is Protein FAM162A (154 aa).

The interval 76–102 (RFKKEDEIPETVSLEMLDAAKNKMRVK) is required for proapoptotic activity. A helical transmembrane segment spans residues 103-120 (ISYLMIALTVVGCIFMVI).

It belongs to the UPF0389 family. As to quaternary structure, interacts with HSP90AB1; HSP90AB1 is essential for FAM162A mitochondrial localization and pro-apoptotic activity. Interacts with VDAC2; the interaction is probably involved in inducing mitochondrial permeability transition.

The protein localises to the mitochondrion membrane. Its function is as follows. Proposed to be involved in regulation of apoptosis; the exact mechanism may differ between cell types/tissues. May be involved in hypoxia-induced cell death of transformed cells implicating cytochrome C release and caspase activation (such as CASP9) and inducing mitochondrial permeability transition. May be involved in hypoxia-induced cell death of neuronal cells probably by promoting release of AIFM1 from mitochondria to cytoplasm and its translocation to the nucleus; however, the involvement of caspases has been reported conflictingly. In Homo sapiens (Human), this protein is Protein FAM162A (FAM162A).